A 556-amino-acid chain; its full sequence is Peptide chain release factor 3 (556 aa).

Residues 28-297 (QQRRNFAIIS…AFLDYALKPG (270 aa)) form the tr-type G domain. GTP-binding positions include 37-44 (SHPDAGKT), 105-109 (DTPGH), and 159-162 (NKMD).

It belongs to the TRAFAC class translation factor GTPase superfamily. Classic translation factor GTPase family. PrfC subfamily.

The protein localises to the cytoplasm. Increases the formation of ribosomal termination complexes and stimulates activities of RF-1 and RF-2. It binds guanine nucleotides and has strong preference for UGA stop codons. It may interact directly with the ribosome. The stimulation of RF-1 and RF-2 is significantly reduced by GTP and GDP, but not by GMP. The chain is Peptide chain release factor 3 from Synechococcus sp. (strain ATCC 27144 / PCC 6301 / SAUG 1402/1) (Anacystis nidulans).